The primary structure comprises 131 residues: Profilin (131 aa).

Belongs to the profilin family. Occurs in many kinds of cells as a complex with monomeric actin in a 1:1 ratio.

It is found in the cytoplasm. Its subcellular location is the cytoskeleton. Functionally, binds to actin and affects the structure of the cytoskeleton. At high concentrations, profilin prevents the polymerization of actin, whereas it enhances it at low concentrations. By binding to PIP2, it inhibits the formation of IP3 and DG. This Cynodon dactylon (Bermuda grass) protein is Profilin (PRO1).